A 236-amino-acid chain; its full sequence is Small ribosomal subunit protein uS2c (236 aa).

Belongs to the universal ribosomal protein uS2 family.

It is found in the plastid. The protein localises to the chloroplast. In Nicotiana tabacum (Common tobacco), this protein is Small ribosomal subunit protein uS2c (rps2).